A 134-amino-acid polypeptide reads, in one-letter code: Endoribonuclease YbeY (134 aa).

Residues His-94, His-98, and His-104 each coordinate Zn(2+).

This sequence belongs to the endoribonuclease YbeY family. Requires Zn(2+) as cofactor.

The protein resides in the cytoplasm. In terms of biological role, single strand-specific metallo-endoribonuclease involved in late-stage 70S ribosome quality control and in maturation of the 3' terminus of the 16S rRNA. This Campylobacter fetus subsp. fetus (strain 82-40) protein is Endoribonuclease YbeY.